The primary structure comprises 67 residues: MSSLPVMVLFGLSFPPVFFVLMVSLTLFFVVNRLLQPTGIYDFVWHPALFNSALFCCLFYLLFRYGL.

A run of 2 helical transmembrane segments spans residues 10–30 (FGLS…LFFV) and 43–63 (FVWH…YLLF).

It belongs to the AaeX family.

It is found in the cell membrane. This chain is Protein AaeX, found in Pectobacterium atrosepticum (strain SCRI 1043 / ATCC BAA-672) (Erwinia carotovora subsp. atroseptica).